The chain runs to 259 residues: Pyrroloquinoline-quinone synthase (259 aa).

This sequence belongs to the PqqC family.

The enzyme catalyses 6-(2-amino-2-carboxyethyl)-7,8-dioxo-1,2,3,4,7,8-hexahydroquinoline-2,4-dicarboxylate + 3 O2 = pyrroloquinoline quinone + 2 H2O2 + 2 H2O + H(+). The protein operates within cofactor biosynthesis; pyrroloquinoline quinone biosynthesis. Functionally, ring cyclization and eight-electron oxidation of 3a-(2-amino-2-carboxyethyl)-4,5-dioxo-4,5,6,7,8,9-hexahydroquinoline-7,9-dicarboxylic-acid to PQQ. This is Pyrroloquinoline-quinone synthase from Bradyrhizobium diazoefficiens (strain JCM 10833 / BCRC 13528 / IAM 13628 / NBRC 14792 / USDA 110).